Consider the following 286-residue polypeptide: MKAKPLSQDPGSKRYAYRINKEENRKELKHVKINESSLVQEGQKIDLPKKRYYRQRAHSNPFSDHQLEYPVSPQDMDWSKLYPYYKNAENGQMTKKVTIADIGCGFGGLMIDLSPAFPEDLILGMEIRVQVTNYVEDRIIALRNNTASKHGFQNINVLRGNAMKFLPNFFEKGQLSKMFFCFPDPHFKQRKHKARIITNTLLSEYAYVLKEGGVVYTITDVKDLHEWMVKHLEEHPLFERLSKEWEENDECVKIMRNATEEGKKVERKKGDKFVACFTRLPTPAIL.

A phosphoserine mark is found at Ser7 and Ser59. S-adenosyl-L-methionine contacts are provided by residues Gly103, 126 to 127, 161 to 162, and Cys181; these read EI and NA. Asp184 is an active-site residue. Residue 259–261 coordinates S-adenosyl-L-methionine; the sequence is TEE.

It belongs to the class I-like SAM-binding methyltransferase superfamily. TrmB family. Forms a complex with TRM82.

It localises to the nucleus. The catalysed reaction is guanosine(46) in tRNA + S-adenosyl-L-methionine = N(7)-methylguanosine(46) in tRNA + S-adenosyl-L-homocysteine. The protein operates within tRNA modification; N(7)-methylguanine-tRNA biosynthesis. Methyltransferase that catalyzes the formation of N(7)-methylguanine at position 46 (m7G46) in tRNA, a modification required to maintain stability of tRNAs; its absence resulting in tRNA decay. Both the D-stem and T-stem structures of tRNAs are required for efficient methyltransferase activity. In Saccharomyces cerevisiae (strain RM11-1a) (Baker's yeast), this protein is tRNA (guanine-N(7)-)-methyltransferase.